Consider the following 95-residue polypeptide: MTDAVGSIDMPDAEDEAPESKKKSRKGGKRGKKGPLGRLALFYRQIVAELRKVVWPTRSQLTTYTSVVIVFVVVMIGLVTVLDIGFARVVKYVFG.

The interval 1-35 (MTDAVGSIDMPDAEDEAPESKKKSRKGGKRGKKGP) is disordered. Residues 22–35 (KKSRKGGKRGKKGP) show a composition bias toward basic residues. The helical transmembrane segment at 67-87 (VVIVFVVVMIGLVTVLDIGFA) threads the bilayer.

This sequence belongs to the SecE/SEC61-gamma family. As to quaternary structure, component of the Sec protein translocase complex. Heterotrimer consisting of SecY, SecE and SecG subunits. The heterotrimers can form oligomers, although 1 heterotrimer is thought to be able to translocate proteins. Interacts with the ribosome. Interacts with SecDF, and other proteins may be involved. Interacts with SecA.

It localises to the cell membrane. Functionally, essential subunit of the Sec protein translocation channel SecYEG. Clamps together the 2 halves of SecY. May contact the channel plug during translocation. In Streptomyces griseus, this protein is Protein translocase subunit SecE.